The chain runs to 127 residues: Small ribosomal subunit protein uS11 (127 aa).

The protein belongs to the universal ribosomal protein uS11 family. Part of the 30S ribosomal subunit. Interacts with proteins S7 and S18. Binds to IF-3.

Functionally, located on the platform of the 30S subunit, it bridges several disparate RNA helices of the 16S rRNA. Forms part of the Shine-Dalgarno cleft in the 70S ribosome. The polypeptide is Small ribosomal subunit protein uS11 (Chlorobium limicola (strain DSM 245 / NBRC 103803 / 6330)).